The sequence spans 518 residues: Probable cytosol aminopeptidase (518 aa).

Residues Lys-270 and Asp-275 each coordinate Mn(2+). Residue Lys-282 is part of the active site. Asp-293, Asp-352, and Glu-354 together coordinate Mn(2+). The active site involves Arg-356. The segment covering 495–507 (SRTTRQPGSTGET) has biased composition (polar residues). The interval 495-518 (SRTTRQPGSTGETGSRKNRRKSKE) is disordered.

The protein belongs to the peptidase M17 family. The cofactor is Mn(2+).

The protein resides in the cytoplasm. It carries out the reaction Release of an N-terminal amino acid, Xaa-|-Yaa-, in which Xaa is preferably Leu, but may be other amino acids including Pro although not Arg or Lys, and Yaa may be Pro. Amino acid amides and methyl esters are also readily hydrolyzed, but rates on arylamides are exceedingly low.. It catalyses the reaction Release of an N-terminal amino acid, preferentially leucine, but not glutamic or aspartic acids.. Presumably involved in the processing and regular turnover of intracellular proteins. Catalyzes the removal of unsubstituted N-terminal amino acids from various peptides. The protein is Probable cytosol aminopeptidase of Nitrosospira multiformis (strain ATCC 25196 / NCIMB 11849 / C 71).